The following is a 327-amino-acid chain: Serpentine receptor class alpha-33 (327 aa).

6 helical membrane-spanning segments follow: residues 20 to 40, 56 to 76, 133 to 153, 186 to 206, 227 to 247, and 270 to 290; these read FSVY…VLAI, LLIT…FLQN, FSHA…STVF, IIPY…LIIY, AVVS…LFCF, and IIGW…AVFL.

Belongs to the nematode receptor-like protein sra family.

The protein resides in the membrane. The chain is Serpentine receptor class alpha-33 (sra-33) from Caenorhabditis elegans.